We begin with the raw amino-acid sequence, 539 residues long: Probable protein kinase UbiB (539 aa).

Residues 23–43 (DLLFALPLPWWMLAVRFVLPW) traverse the membrane as a helical segment. Positions 125–492 (RFDETPLASA…WHDRKDEPVL (368 aa)) constitute a Protein kinase domain. Residues 131–139 (LASASVAQV) and Lys153 contribute to the ATP site. The active-site Proton acceptor is the Asp288. A run of 2 helical transmembrane segments spans residues 494-514 (LIGA…SEAA) and 517-537 (LLTL…YLIV).

The protein belongs to the ABC1 family. UbiB subfamily.

Its subcellular location is the cell inner membrane. The protein operates within cofactor biosynthesis; ubiquinone biosynthesis [regulation]. In terms of biological role, is probably a protein kinase regulator of UbiI activity which is involved in aerobic coenzyme Q (ubiquinone) biosynthesis. The chain is Probable protein kinase UbiB from Pseudomonas syringae pv. tomato (strain ATCC BAA-871 / DC3000).